A 502-amino-acid chain; its full sequence is Cytochrome P450 monooxygenase pyr9 (502 aa).

The helical transmembrane segment at 5–25 threads the bilayer; sequence EDASIGTVWVTCLLAVGLYFI. N-linked (GlcNAc...) asparagine glycans are attached at residues Asn205, Asn291, and Asn372. Cys437 contributes to the heme binding site.

It belongs to the cytochrome P450 family. Heme serves as cofactor.

It localises to the membrane. It participates in secondary metabolite biosynthesis; terpenoid biosynthesis. Its function is as follows. Cytochrome P450 monooxygenase; part of the gene cluster that mediates the biosynthesis of pyripyropene A, a specific human acyl-coenzyme A:cholesterol acyltransferase 2 inhibitor. The first step of the pathway is the synthesis of nicotinyl-CoA from nicotinic acid by the nicotinic acid-CoA ligase pyr1. Nicotinyl-CoA is then a substrate of polyketide synthase pyr2 to produce 4-hydroxy-6-(3-pyridinyl)-2H-pyran-2-one (HPPO) which is further prenylated by the polyprenyl transferase pyr6 to yield farnesyl-HPPO. The next steps consist of an epoxidation of farnesyl-HPPO to epoxyfarnesyl-HPPO by FAD-dependent monooxygenase pyr5 and a cyclization of the terpenoid portion by the terpene cyclase pyr4 to yield deacetyl-pyripyropene E. The 2 cytochrome P450 monooxygenases pyr3 and pyr9, and the 2 acetyltransferases pyr7 and pyr8 are involved in the conversion of deacetyl-pyripyropene E into pyripyropene A through several cycles of oxidation and acetylation steps. Pyr7 acetylates deacetyl-pyripyropene E to pyripyropene E which is oxidized to 11-deacetyl-pyripyropene O by pyr3, which is in turn acetylated into pyripyropene O by pyr8. Pyripyropene O is then oxidized to deacetyl-pyripyropene A by pyr9. Deacetyl-pyripyropene A is finally acetylated to pyripyropene A by pyr8. In Aspergillus fumigatus (strain ATCC MYA-4609 / CBS 101355 / FGSC A1100 / Af293) (Neosartorya fumigata), this protein is Cytochrome P450 monooxygenase pyr9.